An 84-amino-acid polypeptide reads, in one-letter code: Small ribosomal subunit protein bS16 (84 aa).

This sequence belongs to the bacterial ribosomal protein bS16 family.

The protein is Small ribosomal subunit protein bS16 of Ralstonia pickettii (strain 12J).